We begin with the raw amino-acid sequence, 135 residues long: Small ribosomal subunit protein uS8 (135 aa).

This sequence belongs to the universal ribosomal protein uS8 family. Part of the 30S ribosomal subunit. Contacts proteins S5 and S12.

In terms of biological role, one of the primary rRNA binding proteins, it binds directly to 16S rRNA central domain where it helps coordinate assembly of the platform of the 30S subunit. This is Small ribosomal subunit protein uS8 from Parafrankia sp. (strain EAN1pec).